The sequence spans 202 residues: Glycerol-3-phosphate acyltransferase (202 aa).

5 consecutive transmembrane segments (helical) span residues 3–23, 87–107, 118–138, 144–164, and 167–187; these read NLIIYAFIYLLGSIPFGLILA, LLWSVAVLAILGHCFSIYLLF, GAMIVLLPLEVLTAFIVWVVI, ISSLASLAALLAFVVSSFIFN, and LEIHTHAPVFIIAFIIVYKHL.

It belongs to the PlsY family. In terms of assembly, probably interacts with PlsX.

Its subcellular location is the cell inner membrane. It carries out the reaction an acyl phosphate + sn-glycerol 3-phosphate = a 1-acyl-sn-glycero-3-phosphate + phosphate. It participates in lipid metabolism; phospholipid metabolism. Its function is as follows. Catalyzes the transfer of an acyl group from acyl-phosphate (acyl-PO(4)) to glycerol-3-phosphate (G3P) to form lysophosphatidic acid (LPA). This enzyme utilizes acyl-phosphate as fatty acyl donor, but not acyl-CoA or acyl-ACP. This Campylobacter jejuni subsp. jejuni serotype O:2 (strain ATCC 700819 / NCTC 11168) protein is Glycerol-3-phosphate acyltransferase.